Here is a 320-residue protein sequence, read N- to C-terminus: Tabersonine synthase (320 aa).

Residues 78–80 carry the Involved in the stabilization of the negatively charged intermediate by the formation of the oxyanion hole motif; it reads HGA. Glycine 81 lines the (-)-tabersonine pocket. Residue serine 170 is the Proton acceptor of the active site. Aspartate 266 is a catalytic residue. Residue tyrosine 297 coordinates (-)-tabersonine. The Proton donor/acceptor role is filled by tyrosine 297.

It belongs to the 'GDXG' lipolytic enzyme family. In terms of assembly, interacts with dehydroprecondylocarpine acetate synthase (DPAS). As to expression, expressed in leaf epidermis.

The protein localises to the cytoplasm. It is found in the cytosol. The protein resides in the nucleus. It catalyses the reaction dehydrosecodine = (-)-tabersonine. The enzyme catalyses dihydroprecondylocarpine acetate = (-)-tabersonine + acetate + H(+). It participates in alkaloid biosynthesis. In terms of biological role, component of iboga and aspidosperma monoterpenoid indole alkaloids (MIAs, e.g. tabersonine and catharanthine) biosynthesis pathway from 19E-geissoschizine, psychoactive compounds likely to be used in the treatment of opioid dependence. Catalyzes the conversion of dehydrosecodine to tabersonine, a precursor of vindoline; this process starts with the conversion of dihydroprecondylocarpine acetate to dehydrosecodine. The protein is Tabersonine synthase of Catharanthus roseus (Madagascar periwinkle).